A 158-amino-acid chain; its full sequence is Putative pre-16S rRNA nuclease (158 aa).

It belongs to the YqgF nuclease family.

It localises to the cytoplasm. Its function is as follows. Could be a nuclease involved in processing of the 5'-end of pre-16S rRNA. The protein is Putative pre-16S rRNA nuclease of Acidiphilium cryptum (strain JF-5).